The primary structure comprises 399 residues: MADRVVLAYSGGLDTSVAISWIGKETGKEVVAVAIDLGQGGEDMEVVRQRALDCGAVESVVVDARDEFADEYCLPTIQANALYMDRYPLVSAISRPLIVKHLVEAARAHGGTTVAHGCTGKGNDQVRFEVGFGSLAPDLDVIAPVRDYAWTREKAIAFAEENEIPINVSKKSPFSIDQNVWGRAVETGFLEDLWNAPTKDVYDYTQDPTVNWQAPDELIISFEAGRPVAIDGKPVSVLEAIQELNRRAGAQGVGRLDVVEDRLVGIKSREIYEAPGAMVLINAHQELEHVTQERELGRYKRQTEQRWSELVYDGLWFSPLKVALDTFIEKTQERVSGDIRLVLHGGAIIVNGRRSNESLYDFNLATYDEGDTFDQSYAKGFVQIHGLSSKVAAKRDLGL.

Position 8–16 (A8–S16) interacts with ATP. L-citrulline is bound at residue Y87. G117 is a binding site for ATP. Positions 119, 123, and 124 each coordinate L-aspartate. N123 lines the L-citrulline pocket. Residues R127, S175, E260, and Y272 each coordinate L-citrulline.

This sequence belongs to the argininosuccinate synthase family. Type 1 subfamily. As to quaternary structure, homotetramer.

The protein resides in the cytoplasm. It catalyses the reaction L-citrulline + L-aspartate + ATP = 2-(N(omega)-L-arginino)succinate + AMP + diphosphate + H(+). It functions in the pathway amino-acid biosynthesis; L-arginine biosynthesis; L-arginine from L-ornithine and carbamoyl phosphate: step 2/3. The protein is Argininosuccinate synthase of Rhodococcus jostii (strain RHA1).